Reading from the N-terminus, the 1107-residue chain is Lon protease homolog, mitochondrial (1107 aa).

A mitochondrion-targeting transit peptide spans 1-31 (MLSRQRIPRILASRTSLAHSIRSFTSTTSSI). Disordered stretches follow at residues 32-152 (RPVA…PGDK) and 273-329 (PEAA…PYEP). Over residues 51 to 60 (TNLSSFSTYT) the composition is skewed to polar residues. The span at 80–101 (EEERKANVEHAEAEAKEAESKQ) shows a compositional bias: basic and acidic residues. The segment covering 122–141 (GAAGGSSAGSGSGADGGSGD) has biased composition (gly residues). Over residues 142–152 (GGKRGRKPGDK) the composition is skewed to basic and acidic residues. The 276-residue stretch at 166–441 (VMAIPIAKRP…KALLVLKKEH (276 aa)) folds into the Lon N-terminal domain. Position 594 to 601 (594 to 601 (GPPGVGKT)) interacts with ATP. The interval 808–858 (PESEALTEEGKAAQEETEKKKSEEAASGETSSPKAATEASEKETTEKPRVA) is disordered. Over residues 815 to 831 (EEGKAAQEETEKKKSEE) the composition is skewed to basic and acidic residues. The span at 832 to 845 (AASGETSSPKAATE) shows a compositional bias: low complexity. The span at 846-856 (ASEKETTEKPR) shows a compositional bias: basic and acidic residues. The Lon proteolytic domain occupies 891 to 1077 (VTPPGVTMGL…SEVFDLIFPK (187 aa)). Active-site residues include serine 983 and lysine 1026. Positions 1085–1107 (KSRIIEDDKSEKEESKKKNDDDE) are disordered.

This sequence belongs to the peptidase S16 family. As to quaternary structure, homohexamer or homoheptamer. Organized in a ring with a central cavity.

Its subcellular location is the mitochondrion matrix. The catalysed reaction is Hydrolysis of proteins in presence of ATP.. ATP-dependent serine protease that mediates the selective degradation of misfolded, unassembled or oxidatively damaged polypeptides as well as certain short-lived regulatory proteins in the mitochondrial matrix. May also have a chaperone function in the assembly of inner membrane protein complexes. Participates in the regulation of mitochondrial gene expression and in the maintenance of the integrity of the mitochondrial genome. Binds to mitochondrial DNA in a site-specific manner. The protein is Lon protease homolog, mitochondrial (pim1) of Neurospora crassa (strain ATCC 24698 / 74-OR23-1A / CBS 708.71 / DSM 1257 / FGSC 987).